Consider the following 259-residue polypeptide: Peroxiredoxin-4 (259 aa).

The Thioredoxin domain occupies 66–224; sequence IRIRKPAPAF…AIRTLKALKF (159 aa). Cysteine 111 functions as the Cysteine sulfenic acid (-SOH) intermediate in the catalytic mechanism.

It belongs to the peroxiredoxin family. AhpC/Prx1 subfamily. Homodimer; disulfide-linked, upon oxidation. 5 homodimers assemble to form a ring-like decamer.

It is found in the cytoplasm. The protein localises to the endoplasmic reticulum. It catalyses the reaction a hydroperoxide + [thioredoxin]-dithiol = an alcohol + [thioredoxin]-disulfide + H2O. Its function is as follows. Thiol-specific peroxidase that catalyzes the reduction of hydrogen peroxide and organic hydroperoxides to water and alcohols, respectively. Plays a role in cell protection against oxidative stress by detoxifying peroxides and as sensor of hydrogen peroxide-mediated signaling events. Regulates the activation of NF-kappa-B in the cytosol by a modulation of I-kappa-B-alpha phosphorylation. This chain is Peroxiredoxin-4 (prdx4), found in Dictyostelium discoideum (Social amoeba).